A 677-amino-acid polypeptide reads, in one-letter code: Methionine--tRNA ligase (677 aa).

The 'HIGH' region signature appears at 15 to 25 (PYANGSIHLGH). Zn(2+) contacts are provided by Cys-146, Cys-149, Cys-159, and Cys-162. The 'KMSKS' region motif lies at 333–337 (KMSKS). Lys-336 contributes to the ATP binding site. Positions 575–677 (DFAKIDLRVA…DGAKPGQQVK (103 aa)) constitute a tRNA-binding domain.

Belongs to the class-I aminoacyl-tRNA synthetase family. MetG type 1 subfamily. In terms of assembly, homodimer. Requires Zn(2+) as cofactor.

The protein resides in the cytoplasm. The enzyme catalyses tRNA(Met) + L-methionine + ATP = L-methionyl-tRNA(Met) + AMP + diphosphate. Its function is as follows. Is required not only for elongation of protein synthesis but also for the initiation of all mRNA translation through initiator tRNA(fMet) aminoacylation. The polypeptide is Methionine--tRNA ligase (Salmonella choleraesuis (strain SC-B67)).